Consider the following 218-residue polypeptide: Phosphoribosylformylglycinamidine synthase subunit PurQ (218 aa).

One can recognise a Glutamine amidotransferase type-1 domain in the interval 2-218 (RVGVIRFPGS…FFRGILKFRG (217 aa)). C85 (nucleophile) is an active-site residue. Catalysis depends on residues H192 and E194.

Part of the FGAM synthase complex composed of 1 PurL, 1 PurQ and 2 PurS subunits.

Its subcellular location is the cytoplasm. The catalysed reaction is N(2)-formyl-N(1)-(5-phospho-beta-D-ribosyl)glycinamide + L-glutamine + ATP + H2O = 2-formamido-N(1)-(5-O-phospho-beta-D-ribosyl)acetamidine + L-glutamate + ADP + phosphate + H(+). The enzyme catalyses L-glutamine + H2O = L-glutamate + NH4(+). Its pathway is purine metabolism; IMP biosynthesis via de novo pathway; 5-amino-1-(5-phospho-D-ribosyl)imidazole from N(2)-formyl-N(1)-(5-phospho-D-ribosyl)glycinamide: step 1/2. Functionally, part of the phosphoribosylformylglycinamidine synthase complex involved in the purines biosynthetic pathway. Catalyzes the ATP-dependent conversion of formylglycinamide ribonucleotide (FGAR) and glutamine to yield formylglycinamidine ribonucleotide (FGAM) and glutamate. The FGAM synthase complex is composed of three subunits. PurQ produces an ammonia molecule by converting glutamine to glutamate. PurL transfers the ammonia molecule to FGAR to form FGAM in an ATP-dependent manner. PurS interacts with PurQ and PurL and is thought to assist in the transfer of the ammonia molecule from PurQ to PurL. The protein is Phosphoribosylformylglycinamidine synthase subunit PurQ of Methanothermobacter thermautotrophicus (strain ATCC 29096 / DSM 1053 / JCM 10044 / NBRC 100330 / Delta H) (Methanobacterium thermoautotrophicum).